The chain runs to 639 residues: 1-deoxy-D-xylulose-5-phosphate synthase (639 aa).

Thiamine diphosphate-binding positions include His-79 and 120-122; that span reads AHS. Asp-151 is a binding site for Mg(2+). Thiamine diphosphate-binding positions include 152 to 153, Asn-180, Tyr-289, and Glu-371; that span reads GA. Asn-180 contacts Mg(2+).

Belongs to the transketolase family. DXPS subfamily. As to quaternary structure, homodimer. Requires Mg(2+) as cofactor. It depends on thiamine diphosphate as a cofactor.

The catalysed reaction is D-glyceraldehyde 3-phosphate + pyruvate + H(+) = 1-deoxy-D-xylulose 5-phosphate + CO2. The protein operates within metabolic intermediate biosynthesis; 1-deoxy-D-xylulose 5-phosphate biosynthesis; 1-deoxy-D-xylulose 5-phosphate from D-glyceraldehyde 3-phosphate and pyruvate: step 1/1. Its function is as follows. Catalyzes the acyloin condensation reaction between C atoms 2 and 3 of pyruvate and glyceraldehyde 3-phosphate to yield 1-deoxy-D-xylulose-5-phosphate (DXP). The chain is 1-deoxy-D-xylulose-5-phosphate synthase from Rhizorhabdus wittichii (strain DSM 6014 / CCUG 31198 / JCM 15750 / NBRC 105917 / EY 4224 / RW1) (Sphingomonas wittichii).